Consider the following 164-residue polypeptide: Respiratory growth induced protein 2 (164 aa).

The protein belongs to the RGI1 family.

The protein localises to the cytoplasm. Involved in the control of energetic metabolism and significantly contribute to cell fitness, especially under respiratory growth conditions. The sequence is that of Respiratory growth induced protein 2 (RGI2) from Saccharomyces cerevisiae (strain JAY291) (Baker's yeast).